A 473-amino-acid polypeptide reads, in one-letter code: Siroheme synthase (473 aa).

Positions 1–222 (MNTQPHHSSP…GDESRADARL (222 aa)) are precorrin-2 dehydrogenase /sirohydrochlorin ferrochelatase. NAD(+) contacts are provided by residues 37 to 38 (EI) and 58 to 59 (EK). Positions 233-473 (GEVWLVGAGP…QVVRHRVVSP (241 aa)) are uroporphyrinogen-III C-methyltransferase. Proline 242 is an S-adenosyl-L-methionine binding site. The active-site Proton acceptor is the aspartate 265. Lysine 287 serves as the catalytic Proton donor. S-adenosyl-L-methionine contacts are provided by residues 318 to 320 (GGD), isoleucine 323, 348 to 349 (SA), methionine 401, and glycine 430.

It in the N-terminal section; belongs to the precorrin-2 dehydrogenase / sirohydrochlorin ferrochelatase family. In the C-terminal section; belongs to the precorrin methyltransferase family.

It carries out the reaction uroporphyrinogen III + 2 S-adenosyl-L-methionine = precorrin-2 + 2 S-adenosyl-L-homocysteine + H(+). The catalysed reaction is precorrin-2 + NAD(+) = sirohydrochlorin + NADH + 2 H(+). It catalyses the reaction siroheme + 2 H(+) = sirohydrochlorin + Fe(2+). It participates in cofactor biosynthesis; adenosylcobalamin biosynthesis; precorrin-2 from uroporphyrinogen III: step 1/1. The protein operates within cofactor biosynthesis; adenosylcobalamin biosynthesis; sirohydrochlorin from precorrin-2: step 1/1. It functions in the pathway porphyrin-containing compound metabolism; siroheme biosynthesis; precorrin-2 from uroporphyrinogen III: step 1/1. Its pathway is porphyrin-containing compound metabolism; siroheme biosynthesis; siroheme from sirohydrochlorin: step 1/1. It participates in porphyrin-containing compound metabolism; siroheme biosynthesis; sirohydrochlorin from precorrin-2: step 1/1. Functionally, multifunctional enzyme that catalyzes the SAM-dependent methylations of uroporphyrinogen III at position C-2 and C-7 to form precorrin-2 via precorrin-1. Then it catalyzes the NAD-dependent ring dehydrogenation of precorrin-2 to yield sirohydrochlorin. Finally, it catalyzes the ferrochelation of sirohydrochlorin to yield siroheme. This chain is Siroheme synthase, found in Gluconobacter oxydans (strain 621H) (Gluconobacter suboxydans).